The sequence spans 97 residues: Protein SENESCENCE-ASSOCIATED GENE 21, mitochondrial (97 aa).

Residues 1 to 46 (MARSISNVKIVSAFVSRELSNAIFRRGYAATAAQGSVSSGGRSGAV) constitute a mitochondrion transit peptide.

Belongs to the LEA type 3 family. As to expression, expressed in roots, stems leaves and flowers, but not in seeds. In short days, observed in cotyledons and roots but absent from rosette leaves.

The protein localises to the mitochondrion. In terms of biological role, mediates tolerance to oxidative stresses (e.g. hydrogen peroxide H(2)O(2), diamide, menadione and tert-butyl hydroperoxide) by minimizing the negative effects of oxidation and monitoring photosynthesis during stress. Promotes root development. Prevents premature aging (e.g. senescence and flowering). Involved in resistance against compatible pathogens such as Botrytis cinerea and Pseudomonas syringae pv. tomato. The protein is Protein SENESCENCE-ASSOCIATED GENE 21, mitochondrial of Arabidopsis thaliana (Mouse-ear cress).